The chain runs to 84 residues: Sec-independent protein translocase protein TatA (84 aa).

The chain crosses the membrane as a helical span at residues 1 to 21; it reads MGGISIWQLLIVAVIVVLLFG. Basic and acidic residues-rich tracts occupy residues 42–55 and 64–84; these read AMSDDDAKQDKTSQ and IADKQGEAKKEDAKSQDKEQV. Positions 42–84 are disordered; that stretch reads AMSDDDAKQDKTSQDADFTAKSIADKQGEAKKEDAKSQDKEQV.

This sequence belongs to the TatA/E family. As to quaternary structure, the Tat system comprises two distinct complexes: a TatABC complex, containing multiple copies of TatA, TatB and TatC subunits, and a separate TatA complex, containing only TatA subunits. Substrates initially bind to the TatABC complex, which probably triggers association of the separate TatA complex to form the active translocon.

It is found in the cell inner membrane. Its function is as follows. Part of the twin-arginine translocation (Tat) system that transports large folded proteins containing a characteristic twin-arginine motif in their signal peptide across membranes. TatA could form the protein-conducting channel of the Tat system. This chain is Sec-independent protein translocase protein TatA, found in Salmonella typhi.